The sequence spans 606 residues: Transmembrane 9 superfamily member 1 (606 aa).

The signal sequence occupies residues 1 to 27 (MTVVGNPRSWSCRWLPILILLLGTGHG). The N-linked (GlcNAc...) asparagine glycan is linked to Asn-178. Transmembrane regions (helical) follow at residues 237–257 (LSII…AVIL), 310–330 (VLGV…MALL), 339–359 (GAIN…SGYV), and 373–393 (VWNI…TWSV). The N-linked (GlcNAc...) asparagine glycan is linked to Asn-401. The next 4 membrane-spanning stretches (helical) occupy residues 412–432 (ILLL…IGGI), 469–489 (VGGF…FATV), 499–519 (GILF…SIAL), and 535–555 (SVLS…FYYA). Asn-559 carries an N-linked (GlcNAc...) asparagine glycan. Residues 570–590 (FGYSLLTGYVFFLMLGTISFF) form a helical membrane-spanning segment.

Belongs to the nonaspanin (TM9SF) (TC 9.A.2) family.

Its subcellular location is the lysosome membrane. It is found in the cytoplasmic vesicle. The protein resides in the autophagosome membrane. In terms of biological role, plays an essential role in autophagy. This is Transmembrane 9 superfamily member 1 (TM9SF1) from Pongo abelii (Sumatran orangutan).